The sequence spans 76 residues: uncharacterized protein (76 aa).

3 helical membrane-spanning segments follow: residues 2–22 (LKVA…YSLF), 28–48 (LLIV…VEAI), and 56–76 (EYLL…KFII).

It localises to the cell membrane. This is an uncharacterized protein from Bacillus subtilis (strain 168).